A 119-amino-acid polypeptide reads, in one-letter code: Single-stranded DNA-binding protein (119 aa).

The 100-residue stretch at 3–102 folds into the SSB domain; sequence INIVTLVGRV…IRVDQLELLG (100 aa).

As to quaternary structure, homotetramer.

The chain is Single-stranded DNA-binding protein (ssb1) from Anabaena variabilis.